A 123-amino-acid chain; its full sequence is Small ribosomal subunit protein uS12 (123 aa).

Residues 1–22 (MATINQLVRKPRKRKAKTSDVR) form a disordered region. 3-methylthioaspartic acid is present on D89. The tract at residues 101 to 123 (ALDTSGVNDRKRGRSKYGTKRPK) is disordered. Residues 111–123 (KRGRSKYGTKRPK) show a composition bias toward basic residues.

Belongs to the universal ribosomal protein uS12 family. Part of the 30S ribosomal subunit. Contacts proteins S8 and S17. May interact with IF1 in the 30S initiation complex.

In terms of biological role, with S4 and S5 plays an important role in translational accuracy. Functionally, interacts with and stabilizes bases of the 16S rRNA that are involved in tRNA selection in the A site and with the mRNA backbone. Located at the interface of the 30S and 50S subunits, it traverses the body of the 30S subunit contacting proteins on the other side and probably holding the rRNA structure together. The combined cluster of proteins S8, S12 and S17 appears to hold together the shoulder and platform of the 30S subunit. The sequence is that of Small ribosomal subunit protein uS12 from Teredinibacter turnerae (strain ATCC 39867 / T7901).